The chain runs to 224 residues: Myogenin (224 aa).

Phosphoserine; by CaMK2G occurs at positions 77 and 79. The region spanning 81–132 (DRRRAATLREKRRLKKVNEAFEALKRSTLLNPNQRLPKVEILRSAIQYIERL) is the bHLH domain. A Phosphothreonine; by CaMK2G modification is found at Thr-87.

In terms of assembly, homodimer and heterodimer with E12; heterodimerization enhances MYOG DNA-binding and transcriptional activities. Interacts with SMARCA4/BRG1/BAF190A. Interacts (via C-terminal region) with SSRP1 and SUPT16H; the interaction is indicative of an interaction with the FACT complex. nteracts with CSRP3. In terms of processing, phosphorylated by CAMK2G on threonine and serine amino acids in a muscle activity-dependent manner. Phosphorylation of Thr-87 impairs both DNA-binding and trans-activation functions in contracting muscles. In terms of tissue distribution, expressed in myoblast cells. Expressed weakly in myotubes (at protein level). Expressed strongly in denervated muscles and in satellite cells isolated from denervated muscles. Expressed weakly in innervated muscle and in satellite cells isolated from innervated muscles.

It localises to the nucleus. Functionally, acts as a transcriptional activator that promotes transcription of muscle-specific target genes and plays a role in muscle differentiation, cell cycle exit and muscle atrophy. Essential for the development of functional embryonic skeletal fiber muscle differentiation. However is dispensable for postnatal skeletal muscle growth; phosphorylation by CAMK2G inhibits its transcriptional activity in respons to muscle activity. Required for the recruitment of the FACT complex to muscle-specific promoter regions, thus promoting gene expression initiation. During terminal myoblast differentiation, plays a role as a strong activator of transcription at loci with an open chromatin structure previously initiated by MYOD1. Together with MYF5 and MYOD1, co-occupies muscle-specific gene promoter core regions during myogenesis. Also cooperates with myocyte-specific enhancer factor MEF2D and BRG1-dependent recruitment of SWI/SNF chromatin-remodeling enzymes to alter chromatin structure at myogenic late gene promoters. Facilitates cell cycle exit during terminal muscle differentiation through the up-regulation of miR-20a expression, which in turn represses genes involved in cell cycle progression. Binds to the E-box containing (E1) promoter region of the miR-20a gene. Also plays a role in preventing reversal of muscle cell differentiation. Contributes to the atrophy-related gene expression in adult denervated muscles. Induces fibroblasts to differentiate into myoblasts. This is Myogenin (Myog) from Mus musculus (Mouse).